Consider the following 121-residue polypeptide: Large ribosomal subunit protein bL12 (121 aa).

Belongs to the bacterial ribosomal protein bL12 family. As to quaternary structure, homodimer. Part of the ribosomal stalk of the 50S ribosomal subunit. Forms a multimeric L10(L12)X complex, where L10 forms an elongated spine to which 2 to 4 L12 dimers bind in a sequential fashion. Binds GTP-bound translation factors.

In terms of biological role, forms part of the ribosomal stalk which helps the ribosome interact with GTP-bound translation factors. Is thus essential for accurate translation. The chain is Large ribosomal subunit protein bL12 from Shewanella piezotolerans (strain WP3 / JCM 13877).